The primary structure comprises 177 residues: Adenine phosphoribosyltransferase (177 aa).

It belongs to the purine/pyrimidine phosphoribosyltransferase family. As to quaternary structure, homodimer.

It localises to the cytoplasm. It carries out the reaction AMP + diphosphate = 5-phospho-alpha-D-ribose 1-diphosphate + adenine. The protein operates within purine metabolism; AMP biosynthesis via salvage pathway; AMP from adenine: step 1/1. Functionally, catalyzes a salvage reaction resulting in the formation of AMP, that is energically less costly than de novo synthesis. The polypeptide is Adenine phosphoribosyltransferase (Pelodictyon phaeoclathratiforme (strain DSM 5477 / BU-1)).